The chain runs to 703 residues: Polyribonucleotide nucleotidyltransferase (703 aa).

Residues D489 and D495 each contribute to the Mg(2+) site. Positions 556–615 constitute a KH domain; that stretch reads PTMIAMKIDTDKIRDVIGKGGATIRAICEETKASIDIEDDGSIKIFGETKEAAEAARQRV. Residues 625-693 enclose the S1 motif domain; sequence GKIYVGKVER…NRGRIKLSIK (69 aa).

The protein belongs to the polyribonucleotide nucleotidyltransferase family. As to quaternary structure, component of the RNA degradosome, which is a multiprotein complex involved in RNA processing and mRNA degradation. It depends on Mg(2+) as a cofactor.

Its subcellular location is the cytoplasm. It catalyses the reaction RNA(n+1) + phosphate = RNA(n) + a ribonucleoside 5'-diphosphate. Its function is as follows. Involved in mRNA degradation. Catalyzes the phosphorolysis of single-stranded polyribonucleotides processively in the 3'- to 5'-direction. This is Polyribonucleotide nucleotidyltransferase from Pseudomonas fluorescens (strain ATCC BAA-477 / NRRL B-23932 / Pf-5).